Reading from the N-terminus, the 501-residue chain is Ribose import ATP-binding protein RbsA (501 aa).

2 ABC transporter domains span residues 8–245 (LKMV…VGRT) and 255–500 (VKKG…VGIN). 40–47 (GENGAGKS) lines the ATP pocket.

Belongs to the ABC transporter superfamily. Ribose importer (TC 3.A.1.2.1) family. The complex is composed of an ATP-binding protein (RbsA), two transmembrane proteins (RbsC) and a solute-binding protein (RbsB).

It is found in the cell membrane. It carries out the reaction D-ribose(out) + ATP + H2O = D-ribose(in) + ADP + phosphate + H(+). Its function is as follows. Part of the ABC transporter complex RbsABC involved in ribose import. Responsible for energy coupling to the transport system. The sequence is that of Ribose import ATP-binding protein RbsA from Clostridium perfringens (strain SM101 / Type A).